Consider the following 541-residue polypeptide: 5' exonuclease Apollo (541 aa).

Residue lysine 334 forms a Glycyl lysine isopeptide (Lys-Gly) (interchain with G-Cter in SUMO2) linkage. Positions 455 to 475 are disordered; the sequence is PLLSRGDSGSPARGNQSDCVG. Residues 492–507 carry the TBM motif; the sequence is ESRGLALKYLLTPVHF.

The protein belongs to the DNA repair metallo-beta-lactamase (DRMBL) family. Interacts with MUS81, MRE11 and FANCD2. Interacts with HSPA2, HSPA8 and HSPA14. Interacts with SPAG5. Interacts with TERF2; the interaction is direct. In terms of processing, ubiquitinated, leading to its degradation. Interaction with TERF2 protects it from ubiquitination.

Its subcellular location is the chromosome. The protein localises to the telomere. The protein resides in the nucleus. It localises to the cytoplasm. It is found in the cytoskeleton. Its subcellular location is the microtubule organizing center. The protein localises to the centrosome. The catalysed reaction is a beta-lactam + H2O = a substituted beta-amino acid. In terms of biological role, 5'-3' exonuclease that plays a central role in telomere maintenance and protection during S-phase. Participates in the protection of telomeres against non-homologous end-joining (NHEJ)-mediated repair, thereby ensuring that telomeres do not fuse. Plays a key role in telomeric loop (T loop) formation by being recruited by TERF2 at the leading end telomeres and by processing leading-end telomeres immediately after their replication via its exonuclease activity: generates 3' single-stranded overhang at the leading end telomeres avoiding blunt leading-end telomeres that are vulnerable to end-joining reactions and expose the telomere end in a manner that activates the DNA repair pathways. Together with TERF2, required to protect telomeres from replicative damage during replication by controlling the amount of DNA topoisomerase (TOP1, TOP2A and TOP2B) needed for telomere replication during fork passage and prevent aberrant telomere topology. Also involved in response to DNA damage: plays a role in response to DNA interstrand cross-links (ICLs) by facilitating double-strand break formation. In case of spindle stress, involved in prophase checkpoint. Possesses beta-lactamase activity, catalyzing the hydrolysis of penicillin G and nitrocefin. Exhibits no activity towards other beta-lactam antibiotic classes including cephalosporins (cefotaxime) and carbapenems (imipenem). The polypeptide is 5' exonuclease Apollo (Dclre1b) (Mus musculus (Mouse)).